The chain runs to 383 residues: Protein phosphatase 2C homolog 4 (383 aa).

Residues 51–356 (SLGLCTARGD…DDITCLVVRL (306 aa)) form the PPM-type phosphatase domain. Residues aspartate 92, aspartate 308, and aspartate 347 each contribute to the Mn(2+) site.

Belongs to the PP2C family. As to quaternary structure, monomer. The cofactor is Mg(2+). Mn(2+) is required as a cofactor.

It is found in the vacuole membrane. It catalyses the reaction O-phospho-L-seryl-[protein] + H2O = L-seryl-[protein] + phosphate. The enzyme catalyses O-phospho-L-threonyl-[protein] + H2O = L-threonyl-[protein] + phosphate. Has a role in the regulation of vacuole fusion. This is Protein phosphatase 2C homolog 4 (ptc4) from Schizosaccharomyces pombe (strain 972 / ATCC 24843) (Fission yeast).